The following is a 269-amino-acid chain: Formamidopyrimidine-DNA glycosylase (269 aa).

The active-site Schiff-base intermediate with DNA is the Pro-2. The Proton donor role is filled by Glu-3. Lys-57 functions as the Proton donor; for beta-elimination activity in the catalytic mechanism. Residues His-90, Arg-109, and Lys-150 each contribute to the DNA site. The FPG-type zinc finger occupies 235 to 269 (QVYGRKGEPCRVCGTPIVASKHAQRATFYCRQCQK). Arg-259 functions as the Proton donor; for delta-elimination activity in the catalytic mechanism.

It belongs to the FPG family. In terms of assembly, monomer. It depends on Zn(2+) as a cofactor.

The enzyme catalyses Hydrolysis of DNA containing ring-opened 7-methylguanine residues, releasing 2,6-diamino-4-hydroxy-5-(N-methyl)formamidopyrimidine.. The catalysed reaction is 2'-deoxyribonucleotide-(2'-deoxyribose 5'-phosphate)-2'-deoxyribonucleotide-DNA = a 3'-end 2'-deoxyribonucleotide-(2,3-dehydro-2,3-deoxyribose 5'-phosphate)-DNA + a 5'-end 5'-phospho-2'-deoxyribonucleoside-DNA + H(+). Functionally, involved in base excision repair of DNA damaged by oxidation or by mutagenic agents. Acts as a DNA glycosylase that recognizes and removes damaged bases. Has a preference for oxidized purines, such as 7,8-dihydro-8-oxoguanine (8-oxoG). Has AP (apurinic/apyrimidinic) lyase activity and introduces nicks in the DNA strand. Cleaves the DNA backbone by beta-delta elimination to generate a single-strand break at the site of the removed base with both 3'- and 5'-phosphates. The protein is Formamidopyrimidine-DNA glycosylase of Enterobacter sp. (strain 638).